We begin with the raw amino-acid sequence, 455 residues long: Argininosuccinate synthase (455 aa).

ATP contacts are provided by residues 17 to 25 and A43; that span reads AFSGGLDTS. Y99 contacts L-citrulline. Positions 129 and 131 each coordinate ATP. 3 residues coordinate L-aspartate: T131, N135, and D136. Residue N135 participates in L-citrulline binding. D136 serves as a coordination point for ATP. The L-citrulline site is built by R139 and S192. D194 lines the ATP pocket. Residues T201, E203, and E280 each contribute to the L-citrulline site. Positions 434–448 are enriched in polar residues; the sequence is TGLPQVDNNNLSSGR. Positions 434–455 are disordered; that stretch reads TGLPQVDNNNLSSGRGLQDKRQ.

The protein belongs to the argininosuccinate synthase family. Type 2 subfamily. In terms of assembly, homotetramer.

The protein localises to the cytoplasm. It carries out the reaction L-citrulline + L-aspartate + ATP = 2-(N(omega)-L-arginino)succinate + AMP + diphosphate + H(+). Its pathway is amino-acid biosynthesis; L-arginine biosynthesis; L-arginine from L-ornithine and carbamoyl phosphate: step 2/3. This chain is Argininosuccinate synthase (argG), found in Yersinia pestis.